Consider the following 476-residue polypeptide: Protein transport protein Sec61 subunit alpha (476 aa).

The Cytoplasmic segment spans residues 2–33 (GIKFLEVIKPFCAVLPEIQKPERKIQFREKVL). The helical transmembrane segment at 34 to 53 (WTAITLFIFLVCCQIPLFGI) threads the bilayer. At 54–76 (MSSDSADPFYWMRVILASNRGTL) the chain is on the lumenal side. The chain crosses the membrane as a helical span at residues 77–96 (MELGISPIVTSGLIMQLLAG). At 97–117 (AKIIEVGDTPKDRALFNGAQK) the chain is on the cytoplasmic side. A helical transmembrane segment spans residues 118–138 (LFGMIITIGQAIVYVMTGMYG). The Lumenal segment spans residues 139–144 (DPSEMG). The helical transmembrane segment at 145–165 (AGICLLIIIQLFVAGLIVLLL) threads the bilayer. At 166–172 (DELLQKG) the chain is on the cytoplasmic side. Residues 173 to 193 (YGLGSGISLFIATNICETIVW) form a helical membrane-spanning segment. The Lumenal segment spans residues 194 to 240 (KAFSPTTVNTGRGTEFEGAIIALFHLLATRTDKVRALREAFYRQNLP). A helical transmembrane segment spans residues 241–261 (NILNLIATVFVFAVVIYFQGF). At 262–288 (RVDLPIKSARYRGQYNTYPIKLFYTSN) the chain is on the cytoplasmic side. A helical transmembrane segment spans residues 289–309 (IPIILQSALVSNLYVISQMLS). Over 310–354 (TRFSGNFLVNLLGTWSDATSGGPARAYPVAGLCYYLSPPESFGSV) the chain is Lumenal. A helical transmembrane segment spans residues 355–375 (LDDPVHAAIYIVFMLGSCAFF). The Cytoplasmic segment spans residues 376 to 420 (SKTWIEVSGSSAKDVAKQLKEQQMVMRGHRETSMVHELNRYIPTA). A helical membrane pass occupies residues 421 to 441 (AAFGGLCIGGLSVMADFLGAI). Topologically, residues 442-445 (GSGT) are lumenal. A helical membrane pass occupies residues 446–462 (GILLAVTIIYQYFEIFV). The Cytoplasmic portion of the chain corresponds to 463–476 (KEQSEMGSMGALLF).

It belongs to the SecY/SEC61-alpha family. The SEC61 channel-forming translocon complex consists of channel-forming core components SEC61A1, SEC61B and SEC61G and different auxiliary components such as SEC62 and SEC63. The SEC61 channel associates with the multi-pass translocon (MPT) complex.

It localises to the endoplasmic reticulum membrane. In terms of biological role, component of SEC61 channel-forming translocon complex that mediates transport of signal peptide-containing precursor polypeptides across the endoplasmic reticulum (ER). Forms a ribosome receptor and a gated pore in the ER membrane, both functions required for cotranslational translocation of nascent polypeptides. May cooperate with auxiliary protein SEC62, SEC63 and HSPA5/BiP to enable post-translational transport of small presecretory proteins. The SEC61 channel is also involved in ER membrane insertion of transmembrane proteins: it mediates membrane insertion of the first few transmembrane segments of proteins, while insertion of subsequent transmembrane regions of multi-pass membrane proteins is mediated by the multi-pass translocon (MPT) complex. The protein is Protein transport protein Sec61 subunit alpha (sec61a) of Dissostichus mawsoni (Antarctic cod).